Consider the following 195-residue polypeptide: Imidazoleglycerol-phosphate dehydratase (195 aa).

Belongs to the imidazoleglycerol-phosphate dehydratase family.

The protein localises to the cytoplasm. The enzyme catalyses D-erythro-1-(imidazol-4-yl)glycerol 3-phosphate = 3-(imidazol-4-yl)-2-oxopropyl phosphate + H2O. Its pathway is amino-acid biosynthesis; L-histidine biosynthesis; L-histidine from 5-phospho-alpha-D-ribose 1-diphosphate: step 6/9. This Aminomonas aminovorus protein is Imidazoleglycerol-phosphate dehydratase.